A 2300-amino-acid polypeptide reads, in one-letter code: Protein hobbit (2300 aa).

The first 21 residues, 1–21, serve as a signal peptide directing secretion; sequence MMLQLLLFCLALFIFVYWVLP. Residues 23-117 form a transmembrane domain region; it reads GISWYLVKRF…LRRTQTLAGK (95 aa). 2 disordered regions span residues 269-290 and 2111-2148; these read TSTG…RSYD and VSDE…GKKG. The span at 270–282 shows a compositional bias: polar residues; that stretch reads STGQPSRRSTQGL. The tract at residues 1750–2300 is required for endoplasmic reticulum-cell membrane contact sites location and binding to phosphatidylinositols; it reads VVSETVGAFL…ASSGKRSGND (551 aa). Positions 2119–2140 are enriched in low complexity; the sequence is ASTSSASTTNLQAKSSTSSSTK.

The protein resides in the cell membrane. Its subcellular location is the endoplasmic reticulum membrane. It is found in the mitochondrion membrane. Tube-forming lipid transport protein which binds to phosphatidylinositols and affects phosphatidylinositol-4,5-bisphosphate (PtdIns-4,5-P2) distribution. The chain is Protein hobbit from Drosophila melanogaster (Fruit fly).